We begin with the raw amino-acid sequence, 524 residues long: Bifunctional purine biosynthesis protein PurH (524 aa).

One can recognise an MGS-like domain in the interval 1–144 (MTRRALVSVS…KNSAHVGVVV (144 aa)).

It belongs to the PurH family.

The enzyme catalyses (6R)-10-formyltetrahydrofolate + 5-amino-1-(5-phospho-beta-D-ribosyl)imidazole-4-carboxamide = 5-formamido-1-(5-phospho-D-ribosyl)imidazole-4-carboxamide + (6S)-5,6,7,8-tetrahydrofolate. It catalyses the reaction IMP + H2O = 5-formamido-1-(5-phospho-D-ribosyl)imidazole-4-carboxamide. It participates in purine metabolism; IMP biosynthesis via de novo pathway; 5-formamido-1-(5-phospho-D-ribosyl)imidazole-4-carboxamide from 5-amino-1-(5-phospho-D-ribosyl)imidazole-4-carboxamide (10-formyl THF route): step 1/1. It functions in the pathway purine metabolism; IMP biosynthesis via de novo pathway; IMP from 5-formamido-1-(5-phospho-D-ribosyl)imidazole-4-carboxamide: step 1/1. The protein is Bifunctional purine biosynthesis protein PurH of Anaeromyxobacter sp. (strain K).